A 241-amino-acid polypeptide reads, in one-letter code: 1-(5-phosphoribosyl)-5-[(5-phosphoribosylamino)methylideneamino] imidazole-4-carboxamide isomerase (241 aa).

The active-site Proton acceptor is the aspartate 8. Aspartate 129 serves as the catalytic Proton donor.

Belongs to the HisA/HisF family.

Its subcellular location is the cytoplasm. It carries out the reaction 1-(5-phospho-beta-D-ribosyl)-5-[(5-phospho-beta-D-ribosylamino)methylideneamino]imidazole-4-carboxamide = 5-[(5-phospho-1-deoxy-D-ribulos-1-ylimino)methylamino]-1-(5-phospho-beta-D-ribosyl)imidazole-4-carboxamide. The protein operates within amino-acid biosynthesis; L-histidine biosynthesis; L-histidine from 5-phospho-alpha-D-ribose 1-diphosphate: step 4/9. The chain is 1-(5-phosphoribosyl)-5-[(5-phosphoribosylamino)methylideneamino] imidazole-4-carboxamide isomerase from Novosphingobium aromaticivorans (strain ATCC 700278 / DSM 12444 / CCUG 56034 / CIP 105152 / NBRC 16084 / F199).